A 184-amino-acid polypeptide reads, in one-letter code: Probable type 3 secretion system regulator AscH (184 aa).

The segment at 1 to 25 (MKIEGSDQLGGEQPQRQPLPPESMA) is disordered.

The protein belongs to the YopR family.

It is found in the secreted. May be involved in the regulation of the assembly of the type III secretion system (T3SS), also called injectisome, which is used to inject bacterial effector proteins into eukaryotic host cells. May control the polymerization of the needle. The chain is Probable type 3 secretion system regulator AscH from Aeromonas salmonicida subsp. salmonicida.